Reading from the N-terminus, the 496-residue chain is Hexokinase-1 (496 aa).

Residues 4–24 (VAVGATVVCTAAVCAVAVLVV) traverse the membrane as a helical segment. The Hexokinase domain occupies 35–487 (GRVLAILKAF…SGIGAALLAA (453 aa)). A hexokinase small subdomain region spans residues 90–228 (SGDEKGLFYA…GLDMRIAALV (139 aa)). 3 residues coordinate ADP: G104, T105, and N106. D-glucose is bound by residues T194, K195, N229, and D230. Residues 229–476 (NDTVGTLAGG…GSVEVTHSND (248 aa)) are hexokinase large subdomain. Residue T253 participates in ADP binding. D-glucose is bound by residues N256, E284, and E315. Residue G441 coordinates ADP.

This sequence belongs to the hexokinase family. As to quaternary structure, interacts with RPT5B in nucleus. Interacts with RHIP1. Interacts with KING1 in mitochondria. Interacts with CLF (via SANT domain) and EZA1/SWN (via SANT domain) in nucleus. In terms of tissue distribution, highly expressed in flowers and siliques, at intermediate levels in roots and stems, and at lower levels in rosette and cauline leaves.

It localises to the mitochondrion outer membrane. The protein resides in the nucleus. It catalyses the reaction a D-hexose + ATP = a D-hexose 6-phosphate + ADP + H(+). The enzyme catalyses D-fructose + ATP = D-fructose 6-phosphate + ADP + H(+). The catalysed reaction is D-glucose + ATP = D-glucose 6-phosphate + ADP + H(+). The protein operates within carbohydrate metabolism; hexose metabolism. It participates in carbohydrate degradation; glycolysis; D-glyceraldehyde 3-phosphate and glycerone phosphate from D-glucose: step 1/4. Fructose and glucose phosphorylating enzyme. May be involved in the phosphorylation of glucose during the export from mitochondrion to cytosol. Acts as a sugar sensor which may regulate sugar-dependent gene repression or activation. Mediates the effects of sugar on plant growth and development independently of its catalytic activity or the sugar metabolism. May regulate the execution of program cell death in plant cells. Promotes roots and leaves growth. Together with sugar, is involved in the regulation of the expression of aquaporin genes, and reduces leaf water conductance, to coordinate sugar levels with the loss of water through transpiration. Regulates cell proliferation and expansion early during leaf development. Involved in sucrose-induced leaf growth stimulation independently of GPT2. May participate to the stimulation of hypocotyl elongation under long-day (LD) conditions. Forms a nuclear complex with CLF and EZA1/SWN to target common glucose-responsive genes and regulate glucose signaling. Is required for CLF- and EZA1/SWN-mediated histone H3 trimethylation on 'Lys-27' (H3K27me3) and glucose-mediated gene repression. This Arabidopsis thaliana (Mouse-ear cress) protein is Hexokinase-1.